Consider the following 409-residue polypeptide: Glycogenin (409 aa).

Leu-8, Tyr-14, and Arg-80 together coordinate UDP. UDP-alpha-D-glucose is bound by residues Leu-8, Tyr-14, Arg-80, Lys-89, Asp-105, Asp-107, Asn-140, Ser-141, Asp-169, Asp-172, and Gln-173. Residues Asp-105 and Asp-107 each coordinate UDP. Asp-105 and Asp-107 together coordinate Mn(2+). O-linked (Glc...) tyrosine glycosylation occurs at Tyr-212. Residues His-229, Gly-232, and Lys-235 each coordinate UDP. His-229 serves as a coordination point for Mn(2+). Residues Gly-232 and Lys-235 each coordinate UDP-alpha-D-glucose. The tract at residues 283 to 303 (RIEEDSHETEEKVDEEVSISE) is disordered.

Belongs to the glycosyltransferase 8 family. Glycogenin subfamily. It depends on Mn(2+) as a cofactor.

The protein resides in the cytoplasm. Its subcellular location is the vacuole. The enzyme catalyses L-tyrosyl-[glycogenin] + UDP-alpha-D-glucose = alpha-D-glucosyl-L-tyrosyl-[glycogenin] + UDP + H(+). The catalysed reaction is [1,4-alpha-D-glucosyl](n)-L-tyrosyl-[glycogenin] + UDP-alpha-D-glucose = [1,4-alpha-D-glucosyl](n+1)-L-tyrosyl-[glycogenin] + UDP + H(+). Its function is as follows. Glycogenin participates in the glycogen biosynthetic process along with glycogen synthase and glycogen branching enzyme. It catalyzes the formation of a short alpha (1,4)-glucosyl chain covalently attached via a glucose 1-O-tyrosyl linkage to internal tyrosine residues and these chains act as primers for the elongation reaction catalyzed by glycogen synthase. This chain is Glycogenin, found in Komagataella phaffii (strain GS115 / ATCC 20864) (Yeast).